A 317-amino-acid polypeptide reads, in one-letter code: Olfactory receptor 5AP2 (317 aa).

Residues 1 to 32 (MVRSGKGIQNKNATEVTEFILLGLSDNPDLQG) lie on the Extracellular side of the membrane. N-linked (GlcNAc...) asparagine glycosylation is present at Asn12. A helical transmembrane segment spans residues 33-53 (VLFALFLIIYTMTLVGNLGMM). Residues 54–61 (ALIKIDRS) lie on the Cytoplasmic side of the membrane. The chain crosses the membrane as a helical span at residues 62–82 (LHTPMYFFLSSLSFVDASYSS). At 83-106 (SVTPKMLVNLMAEDKSISFNGCAT) the chain is on the extracellular side. Cys104 and Cys196 are disulfide-bonded. A helical transmembrane segment spans residues 107–127 (QFFFFGSFLGTECFLLAMMAY). Topologically, residues 128 to 140 (DRYAAIWNPLLYP) are cytoplasmic. The chain crosses the membrane as a helical span at residues 141–161 (VLMSGRICFMLVSTSFLAGFG). Residues 162-203 (NAAIHTGMTFRLSFCGSNKINHFYCDTPPLLKLSCSDTHING) are Extracellular-facing. Residues 204-224 (IVIMAFSSFNVISCVLIVLIS) traverse the membrane as a helical segment. Topologically, residues 225–244 (YLCILIAILKMPSAEGRHKA) are cytoplasmic. A helical transmembrane segment spans residues 245–265 (FSTCASHLMAVTIFFGTILFM). Residues 266–278 (YLRPTSSYSMEQD) lie on the Extracellular side of the membrane. A helical transmembrane segment spans residues 279–299 (KVVSVFYTVVIPMLNPLIYSL). Residues 300–317 (KNKDVKKAVKKILHNYVV) are Cytoplasmic-facing.

Belongs to the G-protein coupled receptor 1 family.

The protein localises to the cell membrane. Odorant receptor. The sequence is that of Olfactory receptor 5AP2 from Mus musculus (Mouse).